The primary structure comprises 181 residues: Lysozyme A (181 aa).

The signal sequence occupies residues 1 to 19 (MRIAFFLLVLAVIIGFAYG). Residues 139–181 (LTDSRPLGPFNVTESEMAQLFIDHEIAMAQCEAEKTCNGFDLE) constitute a propeptide that is removed on maturation.

The protein belongs to the dictyostelium lysozyme family. Post-translationally, contains six disulfide bonds.

It is found in the cytoplasmic vesicle lumen. It carries out the reaction Hydrolysis of 1,4-beta-linkages between N-acetylmuramic acid and N-acetyl-D-glucosamine residues in a peptidoglycan.. Has antibacterial activity against the Gram-positive bacteria B.subtilis, B.megaterium and M.luteus. No antibacterial activity detected against the Gram-positive bacterium S.aureus or against the Gram-negative bacterium E.coli. Lacks chitinase activity. This is Lysozyme A from Dictyostelium discoideum (Social amoeba).